The primary structure comprises 315 residues: MSKLMVFTGNANPELARRVVRRLGLPIGNATVGKFSDSEITVEINENVRGKDVFIIQSTCAPSNDNLMELIVMADALRRASATRVTAVIPYFGYARQDRRVRSARVPITAKVVADMISAVGINRVLTVDLHADQIQGFFDIPVDNVYATPLLLDDLQRQGHENITVVSPDVGGVVRARAFAKLLDDADLAIIDKRRPRANEAQIMHLIGDVEGKTCVLVDDMCDTGGTLCAAAKALKEHGAAKVLAYCTHPVLSGKAIENIKNSVLDELVVTDTIPLTQEALNCPQIRQLSMSDIMAEAVRRVCNEESISAMFGA.

ATP is bound by residues 37-39 and 96-97; these read DSE and RQ. The Mg(2+) site is built by H131 and D170. K194 is a catalytic residue. Residues R196, D220, and 224–228 each bind D-ribose 5-phosphate; that span reads DTGGT.

This sequence belongs to the ribose-phosphate pyrophosphokinase family. Class I subfamily. As to quaternary structure, homohexamer. Mg(2+) serves as cofactor.

Its subcellular location is the cytoplasm. It catalyses the reaction D-ribose 5-phosphate + ATP = 5-phospho-alpha-D-ribose 1-diphosphate + AMP + H(+). It participates in metabolic intermediate biosynthesis; 5-phospho-alpha-D-ribose 1-diphosphate biosynthesis; 5-phospho-alpha-D-ribose 1-diphosphate from D-ribose 5-phosphate (route I): step 1/1. Involved in the biosynthesis of the central metabolite phospho-alpha-D-ribosyl-1-pyrophosphate (PRPP) via the transfer of pyrophosphoryl group from ATP to 1-hydroxyl of ribose-5-phosphate (Rib-5-P). This is Ribose-phosphate pyrophosphokinase from Marinomonas sp. (strain MWYL1).